A 204-amino-acid polypeptide reads, in one-letter code: ATP synthase subunit b 2 (204 aa).

Residues 8-28 (AQSSTTEGAEAHDAAAAGEVH) are disordered. A helical membrane pass occupies residues 56 to 76 (LLWLAITFGLFYLLMSKVIIP).

Belongs to the ATPase B chain family. F-type ATPases have 2 components, F(1) - the catalytic core - and F(0) - the membrane proton channel. F(1) has five subunits: alpha(3), beta(3), gamma(1), delta(1), epsilon(1). F(0) has three main subunits: a(1), b(2) and c(10-14). The alpha and beta chains form an alternating ring which encloses part of the gamma chain. F(1) is attached to F(0) by a central stalk formed by the gamma and epsilon chains, while a peripheral stalk is formed by the delta and b chains.

It is found in the cell inner membrane. In terms of biological role, f(1)F(0) ATP synthase produces ATP from ADP in the presence of a proton or sodium gradient. F-type ATPases consist of two structural domains, F(1) containing the extramembraneous catalytic core and F(0) containing the membrane proton channel, linked together by a central stalk and a peripheral stalk. During catalysis, ATP synthesis in the catalytic domain of F(1) is coupled via a rotary mechanism of the central stalk subunits to proton translocation. Component of the F(0) channel, it forms part of the peripheral stalk, linking F(1) to F(0). The b'-subunit is a diverged and duplicated form of b found in plants and photosynthetic bacteria. In Rhizobium meliloti (strain 1021) (Ensifer meliloti), this protein is ATP synthase subunit b 2 (atpF2).